The following is a 310-amino-acid chain: tRNA-cytidine(32) 2-sulfurtransferase (310 aa).

The PP-loop motif motif lies at 48-53; sequence SGGKDS. [4Fe-4S] cluster contacts are provided by C123, C126, and C214.

It belongs to the TtcA family. Homodimer. It depends on Mg(2+) as a cofactor. Requires [4Fe-4S] cluster as cofactor.

It localises to the cytoplasm. The enzyme catalyses cytidine(32) in tRNA + S-sulfanyl-L-cysteinyl-[cysteine desulfurase] + AH2 + ATP = 2-thiocytidine(32) in tRNA + L-cysteinyl-[cysteine desulfurase] + A + AMP + diphosphate + H(+). It participates in tRNA modification. Functionally, catalyzes the ATP-dependent 2-thiolation of cytidine in position 32 of tRNA, to form 2-thiocytidine (s(2)C32). The sulfur atoms are provided by the cysteine/cysteine desulfurase (IscS) system. The protein is tRNA-cytidine(32) 2-sulfurtransferase of Vibrio vulnificus (strain CMCP6).